We begin with the raw amino-acid sequence, 110 residues long: Large ribosomal subunit protein uL22 (110 aa).

It belongs to the universal ribosomal protein uL22 family. As to quaternary structure, part of the 50S ribosomal subunit.

Functionally, this protein binds specifically to 23S rRNA; its binding is stimulated by other ribosomal proteins, e.g. L4, L17, and L20. It is important during the early stages of 50S assembly. It makes multiple contacts with different domains of the 23S rRNA in the assembled 50S subunit and ribosome. The globular domain of the protein is located near the polypeptide exit tunnel on the outside of the subunit, while an extended beta-hairpin is found that lines the wall of the exit tunnel in the center of the 70S ribosome. The protein is Large ribosomal subunit protein uL22 of Variovorax paradoxus (strain S110).